We begin with the raw amino-acid sequence, 190 residues long: Probable nicotinate-nucleotide adenylyltransferase (190 aa).

It belongs to the NadD family.

It catalyses the reaction nicotinate beta-D-ribonucleotide + ATP + H(+) = deamido-NAD(+) + diphosphate. Its pathway is cofactor biosynthesis; NAD(+) biosynthesis; deamido-NAD(+) from nicotinate D-ribonucleotide: step 1/1. Its function is as follows. Catalyzes the reversible adenylation of nicotinate mononucleotide (NaMN) to nicotinic acid adenine dinucleotide (NaAD). This is Probable nicotinate-nucleotide adenylyltransferase from Azobacteroides pseudotrichonymphae genomovar. CFP2.